The sequence spans 51 residues: Sperm protamine P1 (51 aa).

The protein belongs to the protamine P1 family. Testis.

Its subcellular location is the nucleus. The protein resides in the chromosome. Its function is as follows. Protamines substitute for histones in the chromatin of sperm during the haploid phase of spermatogenesis. They compact sperm DNA into a highly condensed, stable and inactive complex. This is Sperm protamine P1 (PRM1) from Trachypithecus cristatus (Silvered leaf-monkey).